The following is a 310-amino-acid chain: Mitochondrial 2-oxodicarboxylate carrier 1 (310 aa).

6 helical membrane passes run 9–29 (LPFIYQFTAGAIAGVSELLVM), 78–97 (SHLYKGITSPILMEAPKRAI), 126–146 (IYSGASAGAVEAFVVAPFELV), 179–199 (GLEATIWRHVLWNAGYFGIIF), 219–239 (LIAGAIGGTVGCLLNTPFDVV), and 281–301 (MRLAPGGGLLLVVFTNVMDFF). Solcar repeat units lie at residues 9-108 (LPFI…FQTF), 120-204 (MTQK…IRKL), and 213-300 (EKTR…VMDF).

The protein belongs to the mitochondrial carrier (TC 2.A.29) family.

It is found in the mitochondrion inner membrane. Functionally, transports C5-C7 oxodicarboxylates across the inner membranes of mitochondria. Can transport 2-oxoadipate, 2-oxoglutarate, adipate, glutarate, 2-oxopimelate, oxaloacetate, citrate and malate. The main physiological role is probably to supply 2-oxoadipate and 2-oxoglutarate from the mitochondrial matrix to the cytosol where they are used in the biosynthesis of lysine and glutamate, respectively, and in lysine catabolism. This is Mitochondrial 2-oxodicarboxylate carrier 1 (ODC1) from Saccharomyces cerevisiae (strain ATCC 204508 / S288c) (Baker's yeast).